Consider the following 151-residue polypeptide: uncharacterized protein (151 aa).

Positions 35 to 147 form a coiled coil; that stretch reads GIFENERQKL…RETLQESLED (113 aa).

This is an uncharacterized protein from Helicobacter hepaticus (strain ATCC 51449 / 3B1).